Consider the following 376-residue polypeptide: Outer membrane porin C (376 aa).

The signal sequence occupies residues 1–21 (MKLRVLSLMVPALLVAGTAGA).

Belongs to the Gram-negative porin family. In terms of assembly, homotrimer.

The protein resides in the cell outer membrane. Forms pores that allow passive diffusion of small molecules across the outer membrane. In Serratia marcescens, this protein is Outer membrane porin C (ompC).